Consider the following 498-residue polypeptide: ATP synthase subunit beta, chloroplastic (498 aa).

ATP is bound at residue 172–179 (GGAGVGKT).

Belongs to the ATPase alpha/beta chains family. As to quaternary structure, F-type ATPases have 2 components, CF(1) - the catalytic core - and CF(0) - the membrane proton channel. CF(1) has five subunits: alpha(3), beta(3), gamma(1), delta(1), epsilon(1). CF(0) has four main subunits: a(1), b(1), b'(1) and c(9-12).

The protein localises to the plastid. Its subcellular location is the chloroplast thylakoid membrane. The catalysed reaction is ATP + H2O + 4 H(+)(in) = ADP + phosphate + 5 H(+)(out). Functionally, produces ATP from ADP in the presence of a proton gradient across the membrane. The catalytic sites are hosted primarily by the beta subunits. This is ATP synthase subunit beta, chloroplastic from Nicotiana sylvestris (Wood tobacco).